Here is a 210-residue protein sequence, read N- to C-terminus: MEIILLERIEKLGGIGDVVTVKNGFARNYLLPNNKALRANEANRKLFEANRAKIEADNAERRSEAEGRAKDIDGKQIVLIRQASNTGQLYGSVSVRDIVDALAEDGVTGVTKSMVELERPIKSLGLVDVKVKLHPEVVVTVGVNVARSPDEAEMQSQGIDVIAAMFEEEQAEAAAAALEPDSEEEFEAATPPSELAAEASDEDADDAKEA.

Residues 172-210 (EAAAAALEPDSEEEFEAATPPSELAAEASDEDADDAKEA) form a disordered region. The span at 199-210 (ASDEDADDAKEA) shows a compositional bias: acidic residues.

Belongs to the bacterial ribosomal protein bL9 family.

In terms of biological role, binds to the 23S rRNA. In Sphingopyxis alaskensis (strain DSM 13593 / LMG 18877 / RB2256) (Sphingomonas alaskensis), this protein is Large ribosomal subunit protein bL9.